The sequence spans 2235 residues: MQRYHAANCTSAVNNSAIGGASARDSGRADSSSIGNYSLNSRRPPPLTPYKLKCEKDGLNSRLGPPDFHPPTSNSPEENLTKEYVQFGYKETVDGLKESEEIILSQVHTFSKPVVHKCKEAVRKCLRAINESRALKRKAGQVYGVPLSGSLLCKPGFPEQRSCGEETKKRWIESLSQQHKRLRSLADNIPGYRRKTLFEVLIRNNVPLLRATWFIKVTYLNQVRPSPAAISSGTPDKTQASRCEQWTKDVIEYLQYLLDELLSRNSSFPAQQTRDRSPQMLYTGSMQKNSPASTSLYGEETSLHFKWWYMVRLLQWHHAEGLLFPNLIVDWVLKLLQEKEIFEILQLLLPIVYGVLESIVLSQTYVQSLVAIAVRFIQEPAPGGSDLVDNSRRAYTLSALIEMVRYLVLAAPDTFVASDFFPLPPSVAACGPNDVSYTSKAYENLEKLRSNSAEISAQFQGRGVLSRFEFLSFDYTISTIQRSADDLAKIASAGYPQHNVAKAVQALDKALSDGDIRAAYSYLFEDLCNGAVDEAWITDVSPCLRSSLRWIGAISTSFVCSVFFLIEWATCDFRDFRAGVPKDIKFSGRKDCSQVYLVIQLLKQKILGGEFTARKGKNCRNNFLGVSKPSGSMDAFESPGPLHDIIVCWIDQHEVHKGGAKRLQLLVFELIRSGIFNPIAYVRQLIVSGMIDVIQPAVDPERRMRHHRILKQLPGCFVHETLEEAQLFGGDKLSEAVRTYSNERRLLLRELLVEKGKYWNNLVLSDQKSKKISTSLSSVIFPRACNAKSNSKGPRKHTKSSVDIRELKERISALLQFPGMSCGVETPVRDEFQNSVKRSSGSVYSKMDQPEATPGCEDCRRAKRPKMNDEKSSCYQGNSPIASDEEDNWWIKKGSKTVESSLKVDPQIEITKQVPRGRQKMARKTQSLAQLQAARIEGSQGASTSHVCDNKVSCPHHGPGVEGENQKVVDVFRTSTPVDMVSVGNSLKQLQFVDKRSIAVWLTTAVRQLVEEPQKSSVRVGQFNRGAPVEEKNTIRWKLGADELYSILFLLDISLDLVSAVKFLLWLLPKANSTPSFAVQGGRNLVTVPRNVENNMCEIGEAILVSSLRRYENILLSADLVPEAMTALMNRAASLMSSNGKISGSAALVYTRYILKRYGSLPSVVEWHNNFKATSEKKLLSELDHTRSGNGEYGNPLGVPAGVDNPDDYLRKKISIGGARPSRVGLSMRDVLQRHVEEATHYLKKLIGTGTMKASLAEKNDDGYQVAQQIVVGLMDCIRQTGGAAQEGDPSLVSSAVSAIINSVGLSVARITDFSLGNIYQNHPSGVDSSNIARYILRIHITCLCLLKEALGERQSRVFEIALATESSTALTGVFAPVKGSRGQHQLSPESYDSNANNSTIDMSNGTGKMALSRATKITAAVSALVIGSITHGVITLERIVGLLRLKDYLDFVQFVRRTKSSSNGSARSMGASKVESPIEVYVHWFRLLVGNCKTVSEGLVLELVGESSVVAISRMQRMLPLKLVFPPAYSIIAFVLWRPFVSNSNSNSSVHEDTHRLYQSLTMAFHDVIKHLPFRDVCFRDTQGLYELIVADSTDAEFASVFESHGLDMHLKSVAFAPLRARLFLNSLIDCKVPSSGYSHEGVSEAKNRHQGNGTKLVDKLVSVLDCLQPAKFHWQWVELRLLLNEQALAEKLENHDMPLTDAIRSSCPTSEKPDASENEKNFIQILLTRLLVRPDAVPLFSEVVHLFGRSVEDSMLKQAEWFLAGQDVLFGRKTIRQKLIIVGESKGLPTKPQFWKPWGWCNSSSSDHITANKAGKKRKFEITSIEEGEVIEEGSGSRKVLLPRVLDENSPSVGYGITTERAFVQLVLPCIDQSSDESRSTFVNELVRQFSNIEQQLSSVTNRSTTSNKQMGTASSGSEISSNKGSTRKGLRGGSPSLARRSSANTTDTSPPPSPAALRASMSLRLQFLLRLLPVICGEPSFKNTRHALASTIVRLLGSRVVYEDYAVCSPRSELSKAETESTIDPSSMADLSSEVLFDRLLFVLHGLLSNHQPKWLKPRPSSNESSKDFTLFDRDAAESLQNELSRMQLPDTIRWRIQAAMPILLPSLRCSLSCQPHSVPPTALTLVQPSGSTAAAGTNQRNSPAISKSGTAAAQGKLKPTMLAPHQQQEADNTDVVDPWTLLEDGTSSGLSSSNASNSSDMANLRATCWLKGAVRVRRTDLTYVGSVDDDS.

A compositionally biased stretch (low complexity) spans serine 16 to glycine 35. Disordered regions lie at residues serine 16–leucine 80, phenylalanine 268–serine 293, serine 835–aspartate 858, serine 1900–alanine 1959, glycine 2134–lysine 2160, and tryptophan 2183–serine 2202. Over residues methionine 280–serine 293 the composition is skewed to polar residues. Polar residues predominate over residues serine 1900–alanine 1916. Residues serine 1917 to glycine 1927 are compositionally biased toward low complexity. Over residues glycine 2134–alanine 2155 the composition is skewed to polar residues. The segment covering serine 2191–serine 2202 has biased composition (low complexity).

Belongs to the Mediator complex subunit 12 family. Component of the Mediator complex. In terms of tissue distribution, ubiquitous. Higher expression in vascular tissue, shoot apex and developing floral organs.

The protein resides in the nucleus. Component of the Mediator complex, a coactivator involved in the regulated transcription of nearly all RNA polymerase II-dependent genes. Mediator functions as a bridge to convey information from gene-specific regulatory proteins to the basal RNA polymerase II transcription machinery. The Mediator complex, having a compact conformation in its free form, is recruited to promoters by direct interactions with regulatory proteins and serves for the assembly of a functional preinitiation complex with RNA polymerase II and the general transcription factors. Flowering regulator which suppresses FLC expression, promotes FT and TSF expression and up-regulates SOC1 and FUL mainly in an FT-dependent manner under long-day conditions. Involved in diverse developmental aspects through gene regulation and modulation of the auxin response. Acts closely together with MAB13. Involved in the regulation of embryo patterning and cotyledon organogenesis by transiently repressing a transcriptional program that interferes with this process. This is Mediator of RNA polymerase II transcription subunit 12 (MED12) from Arabidopsis thaliana (Mouse-ear cress).